The sequence spans 31 residues: Chymotrypsin (31 aa).

Positions 1–31 (IVGGVEAVPGVWPYQAALFIIDMYFCGGSLI) constitute a Peptidase S1 domain.

This sequence belongs to the peptidase S1 family.

It localises to the secreted. It is found in the extracellular space. It catalyses the reaction Preferential cleavage: Tyr-|-Xaa, Trp-|-Xaa, Phe-|-Xaa, Leu-|-Xaa.. This Penaeus monodon (Giant tiger prawn) protein is Chymotrypsin.